Consider the following 273-residue polypeptide: Zinc finger protein 80 (273 aa).

The segment at 49–71 (YKCKECGSVFNKNSLLVRHQQIH) adopts a C2H2-type 1 zinc-finger fold. The segment at 77–99 (YEYQECGKAFPEKVDFVRHMRIH) adopts a C2H2-type 2; degenerate zinc-finger fold. The C2H2-type 3; atypical zinc finger occupies 105–127 (CKCVECRKVFNRRSHLLCYRQIH). 4 consecutive C2H2-type zinc fingers follow at residues 133-155 (YECS…RVTH), 161-183 (FGCK…MKIH), 187-211 (KPCK…SMTH), and 217-239 (YECK…TRSH).

Belongs to the krueppel C2H2-type zinc-finger protein family.

It is found in the nucleus. In terms of biological role, may be involved in transcriptional regulation. The polypeptide is Zinc finger protein 80 (ZNF80) (Pan troglodytes (Chimpanzee)).